Here is a 494-residue protein sequence, read N- to C-terminus: MDPCKFRPSSSFDTKTTTTNAGQPVWNDNEALTVGPRGPILLEDYHLLEKIAHFARERIPERVVHARGASAKGFFECTHDVTGLTCADFLRAPGARTPVIVRFSTVIHERGSPETIRDPRGFAVKFYTREGNWDLLGNNFPVFFIRDGIKFPDVIHAFKPNPKSHVQEYWRVFDFLSHHPESLHTFFFLFDDVGIPTDYRHMDGFGVNTYTFVSRAGKSHYVKFHWRPTCGVSCLMDDEATLVGGKNHSHATQDLYDSIDAGNFPEWKLFVQVIDPDEEDRFDFDPLDDTKTWPEDLVPLQPVGRLVLDRNVDNFFNENEQLAFGPGLVVPGIYYSDDKMLQCRVFAYADTQRYRLGPNYLMLPVNAPKCGFKNNHYDGAMNFMHRDEEVDYYPSRHAPLRHAEPASFPVPTRPVVGKREKTRIKKENDFVQPGERYRSWAPDRQDRFVRRFSDALAHPKVSHELRVIWIDFLSKCDKSCGMKVANRLNVKPSM.

The interval 1-29 is disordered; the sequence is MDPCKFRPSSSFDTKTTTTNAGQPVWNDN. The segment covering 8-22 has biased composition (polar residues); that stretch reads PSSSFDTKTTTTNAG. Residues histidine 65 and asparagine 138 contribute to the active site. Residue tyrosine 348 participates in heme binding.

The protein belongs to the catalase family. In terms of assembly, homotetramer. It depends on heme as a cofactor.

The protein localises to the peroxisome. It is found in the glyoxysome. It carries out the reaction 2 H2O2 = O2 + 2 H2O. In terms of biological role, occurs in almost all aerobically respiring organisms and serves to protect cells from the toxic effects of hydrogen peroxide. This is Catalase isozyme 2 (CAT2) from Hordeum vulgare (Barley).